Reading from the N-terminus, the 187-residue chain is MSVTSLSFPYGESICWYSPDELDRLPDGALADWLLASGSLTARLRAHCSQFEVRVLGEAMLPGLPGEPQLPHTWVREVLLILDGTPWVFARTLVPEALLTRCGDELTALGDRPLGELLFSSNLFTPGRIEIAGFHSCGTLARLAESLGQNVHGRLWGRRRYFEREGDELIVSEIFLPAAMDYILGPQ.

3 residues coordinate substrate: R76, L114, and E173.

It belongs to the UbiC family.

The protein resides in the cytoplasm. It carries out the reaction chorismate = 4-hydroxybenzoate + pyruvate. The protein operates within cofactor biosynthesis; ubiquinone biosynthesis. Removes the pyruvyl group from chorismate, with concomitant aromatization of the ring, to provide 4-hydroxybenzoate (4HB) for the ubiquinone pathway. This is Probable chorismate pyruvate-lyase from Shewanella amazonensis (strain ATCC BAA-1098 / SB2B).